Reading from the N-terminus, the 577-residue chain is Arginine--tRNA ligase (577 aa).

The 'HIGH' region motif lies at 122–132 (PNVAKEMHVGH).

The protein belongs to the class-I aminoacyl-tRNA synthetase family. In terms of assembly, monomer.

The protein localises to the cytoplasm. It catalyses the reaction tRNA(Arg) + L-arginine + ATP = L-arginyl-tRNA(Arg) + AMP + diphosphate. This is Arginine--tRNA ligase from Escherichia coli O1:K1 / APEC.